A 425-amino-acid chain; its full sequence is UDP-N-acetylglucosamine 1-carboxyvinyltransferase (425 aa).

22–23 (KN) contributes to the phosphoenolpyruvate binding site. A UDP-N-acetyl-alpha-D-glucosamine-binding site is contributed by arginine 98. Residue cysteine 122 is the Proton donor of the active site. Cysteine 122 is subject to 2-(S-cysteinyl)pyruvic acid O-phosphothioketal. UDP-N-acetyl-alpha-D-glucosamine contacts are provided by residues 127–131 (RPVDQ), aspartate 313, and isoleucine 335.

The protein belongs to the EPSP synthase family. MurA subfamily.

The protein resides in the cytoplasm. The catalysed reaction is phosphoenolpyruvate + UDP-N-acetyl-alpha-D-glucosamine = UDP-N-acetyl-3-O-(1-carboxyvinyl)-alpha-D-glucosamine + phosphate. It participates in cell wall biogenesis; peptidoglycan biosynthesis. In terms of biological role, cell wall formation. Adds enolpyruvyl to UDP-N-acetylglucosamine. The chain is UDP-N-acetylglucosamine 1-carboxyvinyltransferase from Xylella fastidiosa (strain 9a5c).